The chain runs to 374 residues: Quinolinate synthase (374 aa).

Iminosuccinate contacts are provided by His-53 and Ser-70. Cys-116 provides a ligand contact to [4Fe-4S] cluster. Iminosuccinate contacts are provided by residues 148–150 (YMN) and Ser-169. Cys-236 is a [4Fe-4S] cluster binding site. Residues 262 to 264 (HPE) and Thr-279 contribute to the iminosuccinate site. Position 327 (Cys-327) interacts with [4Fe-4S] cluster.

It belongs to the quinolinate synthase family. Type 3 subfamily. It depends on [4Fe-4S] cluster as a cofactor.

Its subcellular location is the cytoplasm. It carries out the reaction iminosuccinate + dihydroxyacetone phosphate = quinolinate + phosphate + 2 H2O + H(+). It participates in cofactor biosynthesis; NAD(+) biosynthesis; quinolinate from iminoaspartate: step 1/1. Functionally, catalyzes the condensation of iminoaspartate with dihydroxyacetone phosphate to form quinolinate. In Haloarcula marismortui (strain ATCC 43049 / DSM 3752 / JCM 8966 / VKM B-1809) (Halobacterium marismortui), this protein is Quinolinate synthase.